The primary structure comprises 428 residues: MKILISAVGTTDPISNNHDAALLHIARNYRPDKIVLVYSQEMMVKQDLINKVLLSIEGYNPIIEIDSTILNNDEVFLFDKMYEVMGQIVQKYTNDDNEIILNLSSGTPQIISALFALNRINDYNTQAIQVATPKNRANREYTALTESEIDALIMENQDNRLDFVDRSIKDKSEKFTQALVKRHLRSLIASFDYQAAEAIINRKEYNKLLSKKKIAYIREKLYDFSRVFKNQSILSDILSFPLDDSQKKALNYYLMIDVLKEREHIADVLIKAKSLAEFVIEETIKKDHEGLIVFDGNLPKLNPSFPDCEAILDDIDKKMKKSRGIEDTEERIFSVQSTLNLLSYLNILEFYEYDSQLQTAINGILSLNGERNKVAHGLSEIDTRLLSRKKLKQLSENLRLLLVDCLGIDSSYFNYYDKQNKELIKMLE.

Residues 1-145 (MKILISAVGT…RANREYTALT (145 aa)) form a CARF domain region. The tract at residues 146 to 428 (ESEIDALIME…QNKELIKMLE (283 aa)) is HEPN domain.

The protein belongs to the CRISPR-associated Csm6 family. Homodimer. The composite ssRNase active site is formed at the dimer interface.

Non-specific ssRNase activity is allosterically activated about 1000-fold by cyclic hexaadenylate (cA6), a second messenger produced by Cas10 of the ternary Csm effector complex in the presence of a cognate target RNA. ssRNase activity is inhibited by physiological concentrations of ATP (1 mM), activity is restored by cOA. In terms of biological role, CRISPR (clustered regularly interspaced short palindromic repeat) is an adaptive immune system that provides protection against mobile genetic elements (viruses, transposable elements and conjugative plasmids). CRISPR clusters contain spacers, sequences complementary to antecedent mobile elements, and target invading nucleic acids. CRISPR clusters are transcribed and processed into CRISPR RNA (crRNA). The type III-A Csm complex binds crRNA and acts as a crRNA-guided RNase, DNase and cyclic oligoadenylate synthase; binding of target RNA cognate to the crRNA is required for all activities. In a heterologous host this Csm effector complex restricts ssRNA phage MS2, suggesting it may target RNA viruses in vivo. This protein is not part of the Csm complex. Functionally, csm functions as a non-specific ssDNase. Base-pairing between crRNA and target RNA to form a ternary Csm complex activates a ssDNase activity; target RNA cleavage suppresses the ssDNase, a temporal control that prevents uncontrolled DNA degradation. Viral RNA transcripts probably tether the Csm complex to the viral genome, recruiting Cas10 ssDNA activity which is able to degrade DNA in the transcription bubble, spatially controlling the DNase activity. A single-strand-specific endoribonuclease (ssRNase) that is approximately 1000-fold stimulated by cyclic oligoadenylate (cOA); although several species of cOA are synthesized by this organism only cyclic hexaadenylate (cA6) stimulates the ssRNase activity. Cleaves preferentially within GA or AA dinucleotides, although the presence of cA6 broadens the preference. Linear oligoadenylates do not activate the RNase. This chain is CRISPR system endoribonuclease Csm6, found in Streptococcus thermophilus.